Reading from the N-terminus, the 66-residue chain is UPF0337 protein spyM18_1212 (66 aa).

This sequence belongs to the UPF0337 (CsbD) family.

This chain is UPF0337 protein spyM18_1212, found in Streptococcus pyogenes serotype M18 (strain MGAS8232).